We begin with the raw amino-acid sequence, 122 residues long: Ribonuclease P protein component (122 aa).

The protein belongs to the RnpA family. As to quaternary structure, consists of a catalytic RNA component (M1 or rnpB) and a protein subunit.

The enzyme catalyses Endonucleolytic cleavage of RNA, removing 5'-extranucleotides from tRNA precursor.. RNaseP catalyzes the removal of the 5'-leader sequence from pre-tRNA to produce the mature 5'-terminus. It can also cleave other RNA substrates such as 4.5S RNA. The protein component plays an auxiliary but essential role in vivo by binding to the 5'-leader sequence and broadening the substrate specificity of the ribozyme. This chain is Ribonuclease P protein component, found in Halorhodospira halophila (strain DSM 244 / SL1) (Ectothiorhodospira halophila (strain DSM 244 / SL1)).